The primary structure comprises 187 residues: Dihydrofolate reductase (187 aa).

The DHFR domain occupies 4-185; the sequence is PLNCIVAVSQ…IKYKFEVYEK (182 aa). Residues alanine 10 and 16 to 22 contribute to the NADP(+) site; that span reads GIGKNGD. 31–36 lines the substrate pocket; it reads EFKYFQ. Residue lysine 33 is modified to N6-acetyllysine; alternate. N6-succinyllysine; alternate is present on lysine 33. 55 to 57 contacts NADP(+); sequence RKT. Residues asparagine 65 and arginine 71 each coordinate substrate. Residues 77 to 79 and 117 to 124 contribute to the NADP(+) site; these read SRE and GGSSVYQE.

The protein belongs to the dihydrofolate reductase family. As to quaternary structure, homodimer.

It localises to the mitochondrion. Its subcellular location is the cytoplasm. It catalyses the reaction (6S)-5,6,7,8-tetrahydrofolate + NADP(+) = 7,8-dihydrofolate + NADPH + H(+). Its pathway is cofactor biosynthesis; tetrahydrofolate biosynthesis; 5,6,7,8-tetrahydrofolate from 7,8-dihydrofolate: step 1/1. Its function is as follows. Key enzyme in folate metabolism. Contributes to the de novo mitochondrial thymidylate biosynthesis pathway. Catalyzes an essential reaction for de novo glycine and purine synthesis, and for DNA precursor synthesis. Binds its own mRNA. The sequence is that of Dihydrofolate reductase (Dhfr) from Mus musculus (Mouse).